The following is a 133-amino-acid chain: Small ribosomal subunit protein uS11 (133 aa).

The protein belongs to the universal ribosomal protein uS11 family. Part of the 30S ribosomal subunit. Interacts with proteins S7 and S18. Binds to IF-3.

In terms of biological role, located on the platform of the 30S subunit, it bridges several disparate RNA helices of the 16S rRNA. Forms part of the Shine-Dalgarno cleft in the 70S ribosome. The chain is Small ribosomal subunit protein uS11 from Cupriavidus metallidurans (strain ATCC 43123 / DSM 2839 / NBRC 102507 / CH34) (Ralstonia metallidurans).